The sequence spans 142 residues: Hemoglobin subunit alpha (142 aa).

Ser1 bears the N-acetylserine mark. The Globin domain maps to 1-142 (SLTAKSKSIV…VASALSEKYR (142 aa)). Residue His59 coordinates O2. Position 88 (His88) interacts with heme b.

Belongs to the globin family. As to quaternary structure, heterotetramer of two alpha chains and two beta chains. In terms of tissue distribution, red blood cells.

Its function is as follows. Involved in oxygen transport from gills to the various peripheral tissues. The polypeptide is Hemoglobin subunit alpha (hba) (Electrophorus electricus (Electric eel)).